We begin with the raw amino-acid sequence, 373 residues long: WAT1-related protein At4g30420 (373 aa).

Transmembrane regions (helical) follow at residues Ala-2–Val-22, Val-29–Ser-49, Ile-55–Gly-75, Met-94–Gly-114, Gly-125–Leu-145, Trp-173–Leu-193, Leu-205–Phe-225, Cys-244–Ala-264, Phe-270–Phe-290, and Ile-294–Trp-314. 2 consecutive EamA domains span residues Cys-9–Cys-135 and Cys-186–Leu-313.

The protein belongs to the drug/metabolite transporter (DMT) superfamily. Plant drug/metabolite exporter (P-DME) (TC 2.A.7.4) family.

The protein localises to the membrane. The chain is WAT1-related protein At4g30420 from Arabidopsis thaliana (Mouse-ear cress).